Reading from the N-terminus, the 423-residue chain is Glutamyl-tRNA reductase (423 aa).

Substrate-binding positions include 49 to 52 (TCNR), serine 109, 114 to 116 (EGQ), and glutamine 120. The active-site Nucleophile is cysteine 50. 189 to 194 (GAGETG) is a binding site for NADP(+).

This sequence belongs to the glutamyl-tRNA reductase family. In terms of assembly, homodimer.

It catalyses the reaction (S)-4-amino-5-oxopentanoate + tRNA(Glu) + NADP(+) = L-glutamyl-tRNA(Glu) + NADPH + H(+). The protein operates within porphyrin-containing compound metabolism; protoporphyrin-IX biosynthesis; 5-aminolevulinate from L-glutamyl-tRNA(Glu): step 1/2. Its pathway is porphyrin-containing compound metabolism; chlorophyll biosynthesis. Its function is as follows. Catalyzes the NADPH-dependent reduction of glutamyl-tRNA(Glu) to glutamate 1-semialdehyde (GSA). This chain is Glutamyl-tRNA reductase, found in Chlorobium limicola (strain DSM 245 / NBRC 103803 / 6330).